A 292-amino-acid polypeptide reads, in one-letter code: Ribosomal RNA small subunit methyltransferase A (292 aa).

Asparagine 28, leucine 30, glycine 55, glutamate 76, aspartate 101, and asparagine 126 together coordinate S-adenosyl-L-methionine.

Belongs to the class I-like SAM-binding methyltransferase superfamily. rRNA adenine N(6)-methyltransferase family. RsmA subfamily.

It localises to the cytoplasm. The catalysed reaction is adenosine(1518)/adenosine(1519) in 16S rRNA + 4 S-adenosyl-L-methionine = N(6)-dimethyladenosine(1518)/N(6)-dimethyladenosine(1519) in 16S rRNA + 4 S-adenosyl-L-homocysteine + 4 H(+). Functionally, specifically dimethylates two adjacent adenosines (A1518 and A1519) in the loop of a conserved hairpin near the 3'-end of 16S rRNA in the 30S particle. May play a critical role in biogenesis of 30S subunits. The polypeptide is Ribosomal RNA small subunit methyltransferase A (Bacillus cytotoxicus (strain DSM 22905 / CIP 110041 / 391-98 / NVH 391-98)).